The following is a 348-amino-acid chain: Anthranilate phosphoribosyltransferase (348 aa).

5-phospho-alpha-D-ribose 1-diphosphate-binding positions include glycine 81, 84-85, threonine 89, 91-94, 109-117, and serine 121; these read GD, NIST, and KHGNRSSSG. Glycine 81 serves as a coordination point for anthranilate. Residue serine 93 coordinates Mg(2+). Asparagine 112 is an anthranilate binding site. Anthranilate is bound at residue arginine 167. Residues aspartate 226 and glutamate 227 each coordinate Mg(2+).

It belongs to the anthranilate phosphoribosyltransferase family. Homodimer. Requires Mg(2+) as cofactor.

The catalysed reaction is N-(5-phospho-beta-D-ribosyl)anthranilate + diphosphate = 5-phospho-alpha-D-ribose 1-diphosphate + anthranilate. It participates in amino-acid biosynthesis; L-tryptophan biosynthesis; L-tryptophan from chorismate: step 2/5. Its function is as follows. Catalyzes the transfer of the phosphoribosyl group of 5-phosphorylribose-1-pyrophosphate (PRPP) to anthranilate to yield N-(5'-phosphoribosyl)-anthranilate (PRA). The sequence is that of Anthranilate phosphoribosyltransferase from Nitrosopumilus maritimus (strain SCM1).